A 544-amino-acid chain; its full sequence is Chaperonin GroEL (544 aa).

Residues 29 to 32 (TLGP), 86 to 90 (DGTTT), glycine 413, 476 to 478 (NAL), and aspartate 492 contribute to the ATP site.

This sequence belongs to the chaperonin (HSP60) family. As to quaternary structure, forms a cylinder of 14 subunits composed of two heptameric rings stacked back-to-back. Interacts with the co-chaperonin GroES.

It is found in the cytoplasm. It catalyses the reaction ATP + H2O + a folded polypeptide = ADP + phosphate + an unfolded polypeptide.. In terms of biological role, together with its co-chaperonin GroES, plays an essential role in assisting protein folding. The GroEL-GroES system forms a nano-cage that allows encapsulation of the non-native substrate proteins and provides a physical environment optimized to promote and accelerate protein folding. The protein is Chaperonin GroEL of Desulfitobacterium hafniense (strain DSM 10664 / DCB-2).